The chain runs to 450 residues: Phosphoglucosamine mutase 2 (450 aa).

S101 acts as the Phosphoserine intermediate in catalysis. 4 residues coordinate Mg(2+): S101, D245, D247, and D249. At S101 the chain carries Phosphoserine.

The protein belongs to the phosphohexose mutase family. Mg(2+) is required as a cofactor. Post-translationally, activated by phosphorylation.

The enzyme catalyses alpha-D-glucosamine 1-phosphate = D-glucosamine 6-phosphate. Functionally, catalyzes the conversion of glucosamine-6-phosphate to glucosamine-1-phosphate. The chain is Phosphoglucosamine mutase 2 from Shewanella baltica (strain OS185).